The primary structure comprises 66 residues: Large ribosomal subunit protein bL31 (66 aa).

4 residues coordinate Zn(2+): C16, C18, C36, and C39.

It belongs to the bacterial ribosomal protein bL31 family. Type A subfamily. As to quaternary structure, part of the 50S ribosomal subunit. The cofactor is Zn(2+).

Functionally, binds the 23S rRNA. The sequence is that of Large ribosomal subunit protein bL31 from Sulfurimonas denitrificans (strain ATCC 33889 / DSM 1251) (Thiomicrospira denitrificans (strain ATCC 33889 / DSM 1251)).